Reading from the N-terminus, the 876-residue chain is Inter-alpha-trypsin inhibitor heavy chain H3 (876 aa).

Positions 1–18 (MVALSHLGSALQLGSLWG) are cleaved as a signal peptide. The propeptide occupies 19 to 31 (FPRSPFRLLGKRS). One can recognise a VIT domain in the interval 26–155 (LLGKRSLPEG…KVTFELTYEE (130 aa)). N-linked (GlcNAc...) asparagine glycosylation occurs at N88. Positions 281 to 464 (NVAFVIDISG…LQLQGFYEEV (184 aa)) constitute a VWFA domain. A glycan (N-linked (GlcNAc...) asparagine) is linked at N577. Residue D637 is modified to Aspartate 1-(chondroitin 4-sulfate)-ester. A propeptide spanning residues 638–876 (PHFIIQVPEK…HTDYIVPNLF (239 aa)) is cleaved from the precursor.

This sequence belongs to the ITIH family. In terms of assembly, I-alpha-I plasma protease inhibitors are assembled from one or two heavy chains (HC) and one light chain, bikunin. Pre-alpha-inhibitor (P-alpha-I) is composed of ITIH3/HC3 and bikunin. Heavy chains are linked to bikunin via chondroitin 4-sulfate esterified to the alpha-carboxyl of the C-terminal aspartate after propeptide cleavage.

It is found in the secreted. In terms of biological role, may act as a carrier of hyaluronan in serum or as a binding protein between hyaluronan and other matrix protein, including those on cell surfaces in tissues to regulate the localization, synthesis and degradation of hyaluronan which are essential to cells undergoing biological processes. This chain is Inter-alpha-trypsin inhibitor heavy chain H3 (ITIH3), found in Pongo abelii (Sumatran orangutan).